The chain runs to 58 residues: Ribulose bisphosphate carboxylase large chain (58 aa).

Positions 1-2 are excised as a propeptide; it reads MS. Position 3 is an N-acetylproline (proline 3). Lysine 14 carries the post-translational modification N6,N6,N6-trimethyllysine.

Belongs to the RuBisCO large chain family. Type I subfamily. As to quaternary structure, heterohexadecamer of 8 large chains and 8 small chains.

It is found in the plastid. It localises to the chloroplast. It carries out the reaction 2 (2R)-3-phosphoglycerate + 2 H(+) = D-ribulose 1,5-bisphosphate + CO2 + H2O. The enzyme catalyses D-ribulose 1,5-bisphosphate + O2 = 2-phosphoglycolate + (2R)-3-phosphoglycerate + 2 H(+). Functionally, ruBisCO catalyzes two reactions: the carboxylation of D-ribulose 1,5-bisphosphate, the primary event in carbon dioxide fixation, as well as the oxidative fragmentation of the pentose substrate in the photorespiration process. Both reactions occur simultaneously and in competition at the same active site. This Rosa damascena (Damask rose) protein is Ribulose bisphosphate carboxylase large chain (rbcL).